The sequence spans 179 residues: MARLQEFYKEKVVPGLIEKFGYKSVMEVPRITKITLNMGLGEAVADKKIIENAVGDLTKIAGQKPVVTKARKAIAGFKIRQGYPIGAMVTLRGRAMYEFLDRLVTVALPRVRDFRGVSGRAFDGRGNYNIGVKEQIIFPEIDYDKIDALRGLNISITTTAKTDDEAKALLASFKFPFRN.

The protein belongs to the universal ribosomal protein uL5 family. In terms of assembly, part of the 50S ribosomal subunit; part of the 5S rRNA/L5/L18/L25 subcomplex. Contacts the 5S rRNA and the P site tRNA. Forms a bridge to the 30S subunit in the 70S ribosome.

This is one of the proteins that bind and probably mediate the attachment of the 5S RNA into the large ribosomal subunit, where it forms part of the central protuberance. In the 70S ribosome it contacts protein S13 of the 30S subunit (bridge B1b), connecting the 2 subunits; this bridge is implicated in subunit movement. Contacts the P site tRNA; the 5S rRNA and some of its associated proteins might help stabilize positioning of ribosome-bound tRNAs. The polypeptide is Large ribosomal subunit protein uL5 (Burkholderia multivorans (strain ATCC 17616 / 249)).